We begin with the raw amino-acid sequence, 113 residues long: MSDILVPLIFTDAAAKKVKFLIEGEENPELRLRVYITGGGCSGFQYGFTFDDKLNEGDLTIENLDVALVIDPMSLQYLIGATIDYVEGLDGSRFVVQNPNASSTCGCGASFSI.

C41, C105, and C107 together coordinate iron-sulfur cluster.

The protein belongs to the HesB/IscA family. As to quaternary structure, homodimer. It depends on iron-sulfur cluster as a cofactor.

Functionally, required for insertion of 4Fe-4S clusters for at least IspG. In Glaesserella parasuis serovar 5 (strain SH0165) (Haemophilus parasuis), this protein is Iron-sulfur cluster insertion protein ErpA.